We begin with the raw amino-acid sequence, 214 residues long: Glucose-6-phosphate isomerase (214 aa).

4 residues coordinate Fe cation: histidine 92, histidine 94, glutamate 101, and histidine 140.

Belongs to the archaeal-type GPI family. In terms of assembly, homodimer.

It is found in the cytoplasm. It catalyses the reaction alpha-D-glucose 6-phosphate = beta-D-fructose 6-phosphate. The protein operates within carbohydrate degradation; glycolysis; D-glyceraldehyde 3-phosphate and glycerone phosphate from D-glucose: step 2/4. In Sinorhizobium medicae (strain WSM419) (Ensifer medicae), this protein is Glucose-6-phosphate isomerase.